The chain runs to 242 residues: Small ribosomal subunit protein uS2 (242 aa).

This sequence belongs to the universal ribosomal protein uS2 family.

The chain is Small ribosomal subunit protein uS2 from Shewanella frigidimarina (strain NCIMB 400).